An 87-amino-acid polypeptide reads, in one-letter code: Small ribosomal subunit protein uS19 (87 aa).

A disordered region spans residues M1–K29. Over residues P9–K28 the composition is skewed to basic and acidic residues.

The protein belongs to the universal ribosomal protein uS19 family.

In terms of biological role, protein S19 forms a complex with S13 that binds strongly to the 16S ribosomal RNA. This Protochlamydia amoebophila (strain UWE25) protein is Small ribosomal subunit protein uS19.